Here is a 550-residue protein sequence, read N- to C-terminus: MSDTPKLNQRPEWTALADHAKGTLPHPDLRELFAQDPGRAERYVVRVGDLRIDYSKHLVTDETLALLQELAAATGVSGLRDAMFRGERINITEDRAVLHTALRAPRDAVIEVDGENVVPQVHAVLDKMAGFADRVRSGEWTGHTGRRIRNVVNIGIGGSDLGPAMAYEALRAFTDRSLTLRFVSNVDGADLHEAVRDLDPAETLFIIASKTFTTIETITNATSARSWLLDGLGGDEKAVAKHFVALSTNAEKVADFGIDTANMFEFWDWVGGRYSFDSAIGLSLMIAIGPDRFREMLDGFRIVDEHFRNAEAPANAPLLLGLLGVWYGDFLGAQSHAVLPYSHYLSKFTAYLQQLDMESNGKSVDREGNPVQWQTGPVVWGTPGTNGQHAYYQLIHQGTKLIPADFIGFARPVDELSEELKAQHDLLMANFFAQTQALAFGKTPDEVRAEGVPEELVPHKTFRGNHPTTTVLAAELTPSVLGQLIALYEHKVFVQGAIWNIDSFDQWGVELGKVLAKRVEPALTEGADVPGLDPSTAALVAAYRELKEVH.

The active-site Proton donor is the glutamate 358. Residues histidine 389 and lysine 513 contribute to the active site.

Belongs to the GPI family.

It is found in the cytoplasm. The catalysed reaction is alpha-D-glucose 6-phosphate = beta-D-fructose 6-phosphate. It participates in carbohydrate biosynthesis; gluconeogenesis. It functions in the pathway carbohydrate degradation; glycolysis; D-glyceraldehyde 3-phosphate and glycerone phosphate from D-glucose: step 2/4. Catalyzes the reversible isomerization of glucose-6-phosphate to fructose-6-phosphate. The protein is Glucose-6-phosphate isomerase 1 of Streptomyces coelicolor (strain ATCC BAA-471 / A3(2) / M145).